The sequence spans 346 residues: Uroporphyrinogen decarboxylase (346 aa).

Substrate contacts are provided by residues 23–27 (RQAGR), Asp-72, Tyr-149, Thr-204, and His-318.

Belongs to the uroporphyrinogen decarboxylase family. Homodimer.

The protein localises to the cytoplasm. The catalysed reaction is uroporphyrinogen III + 4 H(+) = coproporphyrinogen III + 4 CO2. Its pathway is porphyrin-containing compound metabolism; protoporphyrin-IX biosynthesis; coproporphyrinogen-III from 5-aminolevulinate: step 4/4. Its function is as follows. Catalyzes the decarboxylation of four acetate groups of uroporphyrinogen-III to yield coproporphyrinogen-III. The chain is Uroporphyrinogen decarboxylase from Synechococcus sp. (strain JA-2-3B'a(2-13)) (Cyanobacteria bacterium Yellowstone B-Prime).